Consider the following 391-residue polypeptide: Terminal nucleotidyltransferase 5C (391 aa).

Belongs to the TENT family. As to quaternary structure, interacts with BCCIP and PABPC1; the interaction has no effect on TENT5C poly(A) polymerase function. Interacts with PLK4; this interaction leads to the TENT5C recruitment into the centrosome.

It is found in the nucleus. The protein localises to the cytoplasm. It localises to the cytoskeleton. The protein resides in the microtubule organizing center. Its subcellular location is the centrosome. The catalysed reaction is RNA(n) + ATP = RNA(n)-3'-adenine ribonucleotide + diphosphate. Catalyzes the transfer of one adenosine molecule from an ATP to an mRNA poly(A) tail bearing a 3'-OH terminal group and enhances mRNA stability and gene expression. Can also elongate RNA oligos ending with uridine molecule, provided that the sequence is adenosine-rich. Mainly targets mRNAs encoding endoplasmic reticulum-targeted protein. This Macaca fascicularis (Crab-eating macaque) protein is Terminal nucleotidyltransferase 5C.